The sequence spans 640 residues: Protein SPT10 (640 aa).

The segment at 1–30 (MLNQHTSSVPDDEHLQMAHQNSSSEVRNEA) is disordered. The N-acetyltransferase domain occupies 121 to 259 (LDYSMDTEAD…AGILKGFDVP (139 aa)). A disordered region spans residues 534–565 (PHLTNNESQDHANPVNRDERDMNHSVPDLDRN). A compositionally biased stretch (basic and acidic residues) spans 549–565 (NRDERDMNHSVPDLDRN).

Functionally, required for normal transcription at a number of loci in yeast. Affects transcription at Ty1 elements, at PHO5, STE6 and ADH2. In Saccharomyces cerevisiae (strain ATCC 204508 / S288c) (Baker's yeast), this protein is Protein SPT10 (SPT10).